The chain runs to 304 residues: Acetylglutamate kinase (304 aa).

Residues 71–72, arginine 93, and asparagine 193 each bind substrate; that span reads GG.

It belongs to the acetylglutamate kinase family. ArgB subfamily.

It localises to the cytoplasm. The catalysed reaction is N-acetyl-L-glutamate + ATP = N-acetyl-L-glutamyl 5-phosphate + ADP. The protein operates within amino-acid biosynthesis; L-arginine biosynthesis; N(2)-acetyl-L-ornithine from L-glutamate: step 2/4. Catalyzes the ATP-dependent phosphorylation of N-acetyl-L-glutamate. In Streptomyces avermitilis (strain ATCC 31267 / DSM 46492 / JCM 5070 / NBRC 14893 / NCIMB 12804 / NRRL 8165 / MA-4680), this protein is Acetylglutamate kinase.